A 1304-amino-acid polypeptide reads, in one-letter code: Zinc finger CCCH domain-containing protein 4 (1304 aa).

Positions 1–33 are enriched in pro residues; it reads MEAVPGTPPPPPSESPPPPSPPPPSTPSPPPCS. The segment at 1–387 is disordered; it reads MEAVPGTPPP…SDHDKPHQQS (387 aa). Residues 53–73 show a composition bias toward acidic residues; sequence DREDGELEEGELEDDGAEEVQ. Residues 80 to 99 are compositionally biased toward basic and acidic residues; that stretch reads ERSRKEKGEKHHSDSEEEKS. Residues serine 92 and serine 94 each carry the phosphoserine modification. Positions 94–128 form a coiled coil; the sequence is SEEEKSHRRLKRKRKKEREKEKRRSKKRRKSKHKR. The span at 100-130 shows a compositional bias: basic residues; that stretch reads HRRLKRKRKKEREKEKRRSKKRRKSKHKRHA. Positions 135–144 are enriched in acidic residues; it reads DFSDFSDDSD. Tyrosine 155 carries the phosphotyrosine modification. Residues 165 to 174 show a composition bias toward polar residues; sequence SHQQYSSSHN. Positions 194–218 are enriched in acidic residues; sequence EDYENEQYGEYEGDEEEDMGKEDYD. Basic and acidic residues predominate over residues 219 to 235; the sequence is DFTKELNQYRRAKEGSS. Over residues 238 to 251 the composition is skewed to basic residues; that stretch reads RGSRGRGRGYRGRG. Over residues 252–264 the composition is skewed to gly residues; it reads SRGGSRGRGMGRG. Residues 277–303 show a composition bias toward acidic residues; sequence PEDEEDLYEEEIEYGESEEPMGDDDYD. Positions 304 to 320 are enriched in basic and acidic residues; sequence DYSKELNQYRRSKDSRG. The segment covering 322-346 has biased composition (basic residues); sequence GLSRGRGRGSRGGRGKGMGRGRGRG. Residues 357–368 show a composition bias toward acidic residues; it reads NDDEDFYDDDMG. A compositionally biased stretch (basic and acidic residues) spans 376 to 387; sequence RRSDHDKPHQQS. 3 C3H1-type zinc fingers span residues 389 to 416, 418 to 445, and 446 to 469; these read KKGK…HDIE, PKKR…HGDF, and PCKL…HDPL. Residues 485–495 are compositionally biased toward acidic residues; sequence AEAGAEDEKEV. A disordered region spans residues 485–567; sequence AEAGAEDEKE…LPTHEPLSPQ (83 aa). Composition is skewed to pro residues over residues 506 to 529 and 538 to 556; these read LPKP…PAPT and GGPP…PPQM. Arginine 599 carries the asymmetric dimethylarginine modification. Disordered regions lie at residues 601 to 691, 719 to 970, and 994 to 1304; these read PGPG…DSPH, PGLV…SHIK, and LPIP…PFCQ. The segment covering 603 to 622 has biased composition (pro residues); it reads PGGPSGPMGPGPNMGPPGPM. The span at 628-660 shows a compositional bias: basic and acidic residues; it reads PDMHPDMHPDMHPDMHPDMHPDMHPDMHPDMHP. Residues 669–683 show a composition bias toward pro residues; it reads NPGPPMGPGGPPMMP. Residues 778–809 adopt a coiled-coil conformation; sequence ALYLRIQQKQQEEERARRLAESSKQDRENEEG. The span at 787-804 shows a compositional bias: basic and acidic residues; sequence QQEEERARRLAESSKQDR. Serine 816 and serine 817 each carry phosphoserine. Over residues 824-852 the composition is skewed to polar residues; sequence SSVTSILKTLRQQTSSRPQASVGEPSSSG. Over residues 869–884 the composition is skewed to basic and acidic residues; that stretch reads SDPRLSRDPRLSRHAE. Phosphoserine is present on residues serine 913, serine 916, and serine 917. A compositionally biased stretch (low complexity) spans 913–929; it reads SLHSSPAGPSSSKGQPP. Residues 994–1005 show a composition bias toward pro residues; that stretch reads LPIPKQDVPPVP. Composition is skewed to polar residues over residues 1028–1044 and 1058–1067; these read NTRQ…SGSN and VNVNTPGQSE. Residues 1068-1085 show a composition bias toward basic and acidic residues; it reads KPSDPRVRKTPTDPRLQK. Composition is skewed to low complexity over residues 1098–1129 and 1137–1146; these read PCPT…VLAA and SSGQSSVLSG. Serine 1104, serine 1109, serine 1111, and serine 1115 each carry phosphoserine. At threonine 1119 the chain carries Phosphothreonine. Over residues 1204–1220 the composition is skewed to polar residues; it reads KASTDGATATDRYNSYN. Residues 1225 to 1235 are compositionally biased toward low complexity; sequence KATAAPTAASS. 2 positions are modified to phosphoserine: serine 1270 and serine 1276.

Belongs to the suppressor of sable family. In terms of assembly, interacts with WDR82.

The protein resides in the chromosome. Functionally, RNA-binding protein that suppresses transcription of long non-coding RNAs (lncRNAs). LncRNAs are defined as transcripts more than 200 nucleotides that are not translated into protein. Together with WDR82, part of a transcription termination checkpoint that promotes transcription termination of lncRNAs and their subsequent degradation by the exosome. The transcription termination checkpoint is activated by the inefficiently spliced first exon of lncRNAs. In Mus musculus (Mouse), this protein is Zinc finger CCCH domain-containing protein 4.